The sequence spans 316 residues: 1-aminocyclopropane-1-carboxylate oxidase 2 (316 aa).

In terms of domain architecture, Fe2OG dioxygenase spans 153–253 (PNFGTKVSNY…RMSLASFYNP (101 aa)). Residues His177, Asp179, and His234 each contribute to the Fe cation site.

Belongs to the iron/ascorbate-dependent oxidoreductase family. Requires Fe cation as cofactor. Leaves.

It catalyses the reaction 1-aminocyclopropane-1-carboxylate + L-ascorbate + O2 = ethene + L-dehydroascorbate + hydrogen cyanide + CO2 + 2 H2O. It participates in alkene biosynthesis; ethylene biosynthesis via S-adenosyl-L-methionine; ethylene from S-adenosyl-L-methionine: step 2/2. This chain is 1-aminocyclopropane-1-carboxylate oxidase 2 (ACO2), found in Solanum lycopersicum (Tomato).